We begin with the raw amino-acid sequence, 198 residues long: Probable nicotinate-nucleotide adenylyltransferase (198 aa).

It belongs to the NadD family.

The enzyme catalyses nicotinate beta-D-ribonucleotide + ATP + H(+) = deamido-NAD(+) + diphosphate. Its pathway is cofactor biosynthesis; NAD(+) biosynthesis; deamido-NAD(+) from nicotinate D-ribonucleotide: step 1/1. Functionally, catalyzes the reversible adenylation of nicotinate mononucleotide (NaMN) to nicotinic acid adenine dinucleotide (NaAD). This is Probable nicotinate-nucleotide adenylyltransferase from Albidiferax ferrireducens (strain ATCC BAA-621 / DSM 15236 / T118) (Rhodoferax ferrireducens).